Here is a 434-residue protein sequence, read N- to C-terminus: Protein arginine N-methyltransferase 2 (434 aa).

The tract at residues 155–198 (IQGEETTEEERKEEEPSNTSDIIDEQKVEQPKEDLKEDPSSNQE) is disordered. Positions 178-193 (DEQKVEQPKEDLKEDP) are enriched in basic and acidic residues. The 242-residue stretch at 193–434 (PSSNQETYLK…YHPEARFMDV (242 aa)) folds into the RMT2 domain. S-adenosyl-L-methionine contacts are provided by residues Tyr200, Met230, 258-263 (FGMGII), 279-281 (EAH), 306-307 (WQ), and Asp327.

This sequence belongs to the class I-like SAM-binding methyltransferase superfamily. RMT2 methyltransferase family. In terms of assembly, monomer.

The protein localises to the cytoplasm. The protein resides in the nucleus. In terms of biological role, S-adenosyl-L-methionine-dependent protein-arginine N-methyltransferase that methylates the delta-nitrogen atom of arginine residues to form N5-methylarginine (type IV) in target proteins. Monomethylates ribosomal protein L12. The sequence is that of Protein arginine N-methyltransferase 2 from Debaryomyces hansenii (strain ATCC 36239 / CBS 767 / BCRC 21394 / JCM 1990 / NBRC 0083 / IGC 2968) (Yeast).